We begin with the raw amino-acid sequence, 189 residues long: MKRLWVTGYRSYELSIFSDKDPKLTVIKYALTNYFKSLLEEGKIDWIISGANLGIEQWALEAAIQLQNEYSVHTALMTPYLEFSKRWNENNQMKYQNLTEQVDFTASTSNYPYMSPAQLKNYQSFMLEHTDRAVLIYDPEHPGKPKYDYEAIQKYQEGHEYPVDIIDFYDLQESAEEYEENHRQENNFY.

It belongs to the UPF0398 family.

The sequence is that of UPF0398 protein LGAS_1023 from Lactobacillus gasseri (strain ATCC 33323 / DSM 20243 / BCRC 14619 / CIP 102991 / JCM 1131 / KCTC 3163 / NCIMB 11718 / NCTC 13722 / AM63).